The chain runs to 503 residues: ATP synthase subunit alpha (503 aa).

Glycine 169–threonine 176 is a binding site for ATP.

This sequence belongs to the ATPase alpha/beta chains family. As to quaternary structure, F-type ATPases have 2 components, CF(1) - the catalytic core - and CF(0) - the membrane proton channel. CF(1) has five subunits: alpha(3), beta(3), gamma(1), delta(1), epsilon(1). CF(0) has three main subunits: a(1), b(2) and c(9-12). The alpha and beta chains form an alternating ring which encloses part of the gamma chain. CF(1) is attached to CF(0) by a central stalk formed by the gamma and epsilon chains, while a peripheral stalk is formed by the delta and b chains.

It localises to the cell membrane. The enzyme catalyses ATP + H2O + 4 H(+)(in) = ADP + phosphate + 5 H(+)(out). In terms of biological role, produces ATP from ADP in the presence of a proton gradient across the membrane. The alpha chain is a regulatory subunit. In Ligilactobacillus salivarius (strain UCC118) (Lactobacillus salivarius), this protein is ATP synthase subunit alpha.